We begin with the raw amino-acid sequence, 372 residues long: Cobalt-precorrin-5B C(1)-methyltransferase (372 aa).

The protein belongs to the CbiD family.

It catalyses the reaction Co-precorrin-5B + S-adenosyl-L-methionine = Co-precorrin-6A + S-adenosyl-L-homocysteine. It participates in cofactor biosynthesis; adenosylcobalamin biosynthesis; cob(II)yrinate a,c-diamide from sirohydrochlorin (anaerobic route): step 6/10. Its function is as follows. Catalyzes the methylation of C-1 in cobalt-precorrin-5B to form cobalt-precorrin-6A. The sequence is that of Cobalt-precorrin-5B C(1)-methyltransferase from Prochlorococcus marinus (strain MIT 9515).